The primary structure comprises 408 residues: tRNA-specific 2-thiouridylase MnmA (408 aa).

ATP-binding positions include Ala-27–Ser-34 and Leu-53. Catalysis depends on Cys-121, which acts as the Nucleophile. Cys-121 and Cys-222 form a disulfide bridge. Gly-145 contributes to the ATP binding site. Positions Arg-172 to Gln-174 are interaction with tRNA. Cys-222 (cysteine persulfide intermediate) is an active-site residue.

It belongs to the MnmA/TRMU family.

The protein resides in the cytoplasm. The enzyme catalyses S-sulfanyl-L-cysteinyl-[protein] + uridine(34) in tRNA + AH2 + ATP = 2-thiouridine(34) in tRNA + L-cysteinyl-[protein] + A + AMP + diphosphate + H(+). Its function is as follows. Catalyzes the 2-thiolation of uridine at the wobble position (U34) of tRNA, leading to the formation of s(2)U34. This chain is tRNA-specific 2-thiouridylase MnmA, found in Rhizobium johnstonii (strain DSM 114642 / LMG 32736 / 3841) (Rhizobium leguminosarum bv. viciae).